Reading from the N-terminus, the 181-residue chain is ATP synthase subunit delta (181 aa).

Belongs to the ATPase delta chain family. In terms of assembly, F-type ATPases have 2 components, F(1) - the catalytic core - and F(0) - the membrane proton channel. F(1) has five subunits: alpha(3), beta(3), gamma(1), delta(1), epsilon(1). F(0) has three main subunits: a(1), b(2) and c(10-14). The alpha and beta chains form an alternating ring which encloses part of the gamma chain. F(1) is attached to F(0) by a central stalk formed by the gamma and epsilon chains, while a peripheral stalk is formed by the delta and b chains.

The protein localises to the cell inner membrane. Its function is as follows. F(1)F(0) ATP synthase produces ATP from ADP in the presence of a proton or sodium gradient. F-type ATPases consist of two structural domains, F(1) containing the extramembraneous catalytic core and F(0) containing the membrane proton channel, linked together by a central stalk and a peripheral stalk. During catalysis, ATP synthesis in the catalytic domain of F(1) is coupled via a rotary mechanism of the central stalk subunits to proton translocation. Functionally, this protein is part of the stalk that links CF(0) to CF(1). It either transmits conformational changes from CF(0) to CF(1) or is implicated in proton conduction. The sequence is that of ATP synthase subunit delta from Blochmanniella pennsylvanica (strain BPEN).